Here is a 152-residue protein sequence, read N- to C-terminus: Deoxyuridine 5'-triphosphate nucleotidohydrolase (152 aa).

Substrate is bound by residues 72-74 (RSG), Asn85, and 89-91 (TVD).

This sequence belongs to the dUTPase family. Requires Mg(2+) as cofactor.

It catalyses the reaction dUTP + H2O = dUMP + diphosphate + H(+). Its pathway is pyrimidine metabolism; dUMP biosynthesis; dUMP from dCTP (dUTP route): step 2/2. Functionally, this enzyme is involved in nucleotide metabolism: it produces dUMP, the immediate precursor of thymidine nucleotides and it decreases the intracellular concentration of dUTP so that uracil cannot be incorporated into DNA. The sequence is that of Deoxyuridine 5'-triphosphate nucleotidohydrolase from Nitrobacter hamburgensis (strain DSM 10229 / NCIMB 13809 / X14).